The chain runs to 1026 residues: Multidrug resistance protein MdtC (1026 aa).

Transmembrane regions (helical) follow at residues 15–35, 333–353, 360–380, 387–407, 431–451, 463–483, 528–548, 853–873, 897–917, 953–973, and 984–1004; these read ILIAAAITLCGILGFRLLPVA, EVEETLAISVALVILVVFLFL, LIPAVAVPVSLIGTFAAMYLC, LSLMALTIATGFVVDDAIVVL, VGFTVISMSLSLVAVFLPLLL, FAVTLSVAIGISLVVSLTLTP, LVGVVFLGTVALNIWLYIAIP, LILIVAAIATVYIVLEILYES, LFNAPFSLIALIGIMLLIGIV, PIMMTTLAALFGALPLVLSGG, and ITIVGGLVMSQLLTLYTTPVV.

Belongs to the resistance-nodulation-cell division (RND) (TC 2.A.6) family. MdtC subfamily. As to quaternary structure, part of a tripartite efflux system composed of MdtA, MdtB and MdtC. MdtC forms a heteromultimer with MdtB.

It localises to the cell inner membrane. The protein is Multidrug resistance protein MdtC of Salmonella paratyphi A (strain AKU_12601).